Consider the following 218-residue polypeptide: N-(5'-phosphoribosyl)anthranilate isomerase (218 aa).

Belongs to the TrpF family.

It catalyses the reaction N-(5-phospho-beta-D-ribosyl)anthranilate = 1-(2-carboxyphenylamino)-1-deoxy-D-ribulose 5-phosphate. It participates in amino-acid biosynthesis; L-tryptophan biosynthesis; L-tryptophan from chorismate: step 3/5. This Halobacterium salinarum (strain ATCC 29341 / DSM 671 / R1) protein is N-(5'-phosphoribosyl)anthranilate isomerase.